Consider the following 142-residue polypeptide: Large ribosomal subunit protein uL16 (142 aa).

This sequence belongs to the universal ribosomal protein uL16 family. As to quaternary structure, part of the 50S ribosomal subunit.

Binds 23S rRNA and is also seen to make contacts with the A and possibly P site tRNAs. The sequence is that of Large ribosomal subunit protein uL16 from Thermotoga neapolitana (strain ATCC 49049 / DSM 4359 / NBRC 107923 / NS-E).